The primary structure comprises 471 residues: MSRLGALGGSRAGLGLLLGTAAGLGFLCVLYSQRWKRTQRHGRSQSLPNSLDYAQTSERGRQVTQLRAIPGEAGDAAMLSSLPQEGQEKVLDRLDFVLTSLMALRREVEELQRSLQGLAGEIVGEVRSHMEENQRVARRRRFPFARERSDSTGSSSVYFTASSGATLTDAESEGGYTTANAESDYERDSDKESEDAEDEVSCETVKMGRKDSLDLDMEVASSPASAALEDDDSSGLEDVQLLLQQADELHQGSEQNKQEGFQLLLNNKLAYGSRQDFLWRLARAYSDMTELTEEESEKKSYALNGKEEAEAALKKGDESAASHLWYAVLCGQLAEHEGISKRIQSGFSFKEHVDKAIELQPEDPRGHFLLGRWCYQVSHLSWLEKKTATALFESPLSATVQDALQSFLKAEELQPGFSKAGRVYISKCYRELGKNSEARKWLNLAQELPNITNEDSAFQKDLEELEVILGK.

Over 1–12 (MSRLGALGGSRA) the chain is Mitochondrial intermembrane. The chain crosses the membrane as a helical span at residues 13–35 (GLGLLLGTAAGLGFLCVLYSQRW). The Cytoplasmic segment spans residues 36–471 (KRTQRHGRSQ…LEELEVILGK (436 aa)). Ser-44, Ser-46, Ser-50, and Ser-57 each carry phosphoserine. A coiled-coil region spans residues 91 to 125 (LDRLDFVLTSLMALRREVEELQRSLQGLAGEIVGE). Residues 157 to 163 (VYFTASS) carry the FFAT motif. Position 160 is a phosphothreonine (Thr-160). The interval 168–203 (TDAESEGGYTTANAESDYERDSDKESEDAEDEVSCE) is disordered. 4 positions are modified to phosphoserine: Ser-183, Ser-193, Ser-212, and Ser-233. Positions 191–201 (KESEDAEDEVS) are enriched in acidic residues.

Belongs to the RMDN family. As to quaternary structure, interacts with PTPN2. Interacts with microtubules. Interacts with VAPB. Interacts (via FFAT motif) with MOSPD2 (via MSP domain). Interacts (via phosphorylated FFAT motif) with MOSPD2, VAPA and VAPB. Phosphorylation at Thr-160 of the FFAT motif activates interaction with MOSPD2, VAPA and VAPB.

The protein resides in the mitochondrion outer membrane. It is found in the cytoplasm. It localises to the nucleus. Its subcellular location is the cytoskeleton. The protein localises to the spindle. The protein resides in the spindle pole. In terms of biological role, involved in cellular calcium homeostasis regulation. May participate in differentiation and apoptosis of keratinocytes. Overexpression induces apoptosis. The protein is Regulator of microtubule dynamics protein 3 of Rattus norvegicus (Rat).